A 501-amino-acid polypeptide reads, in one-letter code: Iroquois-class homeodomain protein IRX-3 (501 aa).

A DNA-binding region (homeobox; TALE-type) is located at residues 125 to 188 (FGDPSRPKNA…ANARRRLKKE (64 aa)). A disordered region spans residues 190 to 381 (KMTWAPRSRT…SPPGAAVAPS (192 aa)). Composition is skewed to acidic residues over residues 210–220 (REEEDEEEDEE) and 227–258 (ELEEEELGGEEEDTGGEGLADDDEDEEIDLEN). Phosphoserine is present on residues Ser323 and Ser326. A compositionally biased stretch (pro residues) spans 324 to 339 (LPSPPVSLDPCAPAPA).

The protein belongs to the TALE/IRO homeobox family.

Its subcellular location is the nucleus. Functionally, transcription factor involved in SHH-dependent neural patterning. Together with NKX2-2 and NKX6-1 acts to restrict the generation of motor neurons to the appropriate region of the neural tube. Belongs to the class I proteins of neuronal progenitor factors, which are repressed by SHH signals. Involved in the transcriptional repression of MNX1 in non-motor neuron cells. Acts as a regulator of energy metabolism. The polypeptide is Iroquois-class homeodomain protein IRX-3 (IRX3) (Homo sapiens (Human)).